The primary structure comprises 186 residues: Protein GrpE (186 aa).

Positions 1–13 are enriched in polar residues; sequence MSENTQPEQNQPL. The tract at residues 1-22 is disordered; the sequence is MSENTQPEQNQPLTGAPSPEEL.

Belongs to the GrpE family. As to quaternary structure, homodimer.

Its subcellular location is the cytoplasm. Its function is as follows. Participates actively in the response to hyperosmotic and heat shock by preventing the aggregation of stress-denatured proteins, in association with DnaK and GrpE. It is the nucleotide exchange factor for DnaK and may function as a thermosensor. Unfolded proteins bind initially to DnaJ; upon interaction with the DnaJ-bound protein, DnaK hydrolyzes its bound ATP, resulting in the formation of a stable complex. GrpE releases ADP from DnaK; ATP binding to DnaK triggers the release of the substrate protein, thus completing the reaction cycle. Several rounds of ATP-dependent interactions between DnaJ, DnaK and GrpE are required for fully efficient folding. The protein is Protein GrpE of Polaromonas sp. (strain JS666 / ATCC BAA-500).